Here is a 414-residue protein sequence, read N- to C-terminus: MAKTDKLAQFLDSGIYESDEFNWFFLDTVRITNRSYTRFKVSPSAYYSRFFNSKQLNQHSSESNPKKRKRKQKNSSFHLPSVGEQASNLRHQEARLFLSKAHESFLKEIELLSLTKGLSDDNDDDDSSLLNKCCDDEVSFIELGGVWQAPFYEITLSFNLHCDNEGESCNEQRVFQVFNNLVVNEIGEEVEAEFSNRRYIMPRNSCFYMSDLHHIRNLVPAKSEEGYNLIVIDPPWENASAHQKSKYPTLPNQYFLSLPIKQLAHAEGALVALWVTNREKLLSFVEKELFPAWGIKYVATMYWLKVKPDGTLICDLDLVHHKPYEYLLLGYHFTELAGSEKRSDFKLLDKNQIIMSIPGDFSRKPPIGDILLKHTPGSQPARCLELFAREMAAGWTSWGNEPLHFQDSRYFLKV.

The interval 56-77 (LNQHSSESNPKKRKRKQKNSSF) is disordered.

This sequence belongs to the MT-A70-like family.

In terms of biological role, probable methyltransferase. This chain is Methyltransferase-like protein 2, found in Arabidopsis thaliana (Mouse-ear cress).